Consider the following 122-residue polypeptide: Small ribosomal subunit protein uS12 (122 aa).

The residue at position 89 (Asp89) is a 3-methylthioaspartic acid.

Belongs to the universal ribosomal protein uS12 family. In terms of assembly, part of the 30S ribosomal subunit. Contacts proteins S8 and S17. May interact with IF1 in the 30S initiation complex.

With S4 and S5 plays an important role in translational accuracy. Its function is as follows. Interacts with and stabilizes bases of the 16S rRNA that are involved in tRNA selection in the A site and with the mRNA backbone. Located at the interface of the 30S and 50S subunits, it traverses the body of the 30S subunit contacting proteins on the other side and probably holding the rRNA structure together. The combined cluster of proteins S8, S12 and S17 appears to hold together the shoulder and platform of the 30S subunit. In Neorickettsia sennetsu (strain ATCC VR-367 / Miyayama) (Ehrlichia sennetsu), this protein is Small ribosomal subunit protein uS12.